Consider the following 230-residue polypeptide: Ribose-5-phosphate isomerase A (230 aa).

Substrate-binding positions include 29–32, 85–88, and 98–101; these read TGST, DGAD, and KGGG. Glu107 functions as the Proton acceptor in the catalytic mechanism. Lys125 serves as a coordination point for substrate.

It belongs to the ribose 5-phosphate isomerase family. In terms of assembly, homodimer.

The enzyme catalyses aldehydo-D-ribose 5-phosphate = D-ribulose 5-phosphate. It participates in carbohydrate degradation; pentose phosphate pathway; D-ribose 5-phosphate from D-ribulose 5-phosphate (non-oxidative stage): step 1/1. In terms of biological role, catalyzes the reversible conversion of ribose-5-phosphate to ribulose 5-phosphate. The polypeptide is Ribose-5-phosphate isomerase A (Staphylococcus epidermidis (strain ATCC 35984 / DSM 28319 / BCRC 17069 / CCUG 31568 / BM 3577 / RP62A)).